The primary structure comprises 635 residues: ATP-binding protein Uup (635 aa).

ABC transporter domains follow at residues 1 to 253 (MSLI…RVEE) and 320 to 546 (FEME…KTEE). Residues 36–43 (GRNGAGKS) and 352–359 (GPNGCGKT) each bind ATP. The C-terminal domain (CTD), binds DNA, required to complement a deletion mutant stretch occupies residues 551-635 (KAETVKRSSS…EYLEALKNGG (85 aa)). Residues 563 to 631 (SYKLQRELEQ…FERWEYLEAL (69 aa)) adopt a coiled-coil conformation.

The protein belongs to the ABC transporter superfamily. ABCF family. Uup subfamily.

It localises to the cytoplasm. It catalyses the reaction ATP + H2O = ADP + phosphate + H(+). With respect to regulation, ATPase activity inhibited by N-ethylmaleimide but not by vanadate. Probably plays a role in ribosome assembly or function; overexpression suppresses cold-sensitive growth of a bipA deletion. May be involved in resolution of branched DNA intermediates that result from template switching in postreplication gaps. Binds DNA at Holliday junctions. May be involved in the correct segregation of nucleoids. Has ATPase activity, binds DNA non-sequence specifically; the presence of DNA does not change the ATPase activity. Mutations in this gene cause an increase in RecA-independent precise excision of transposons and insertion elements, and also reduce bacteriophage Mu growth. Genetic interactions among priB, dam, lexA, nagC, polA, rdgB, rdgB, rep and uup link the PriA-PriB replication restart pathway to DNA double-strand break repair. The protein is ATP-binding protein Uup of Escherichia coli (strain K12).